A 403-amino-acid polypeptide reads, in one-letter code: MSEQKKVVLAYSGGLDTSVAIKWLQEQGYNVIACCLDVGEGKDLAFVQQKALEVGATNSYVIDAKEEFAQDYALISLQAHTMYEGKYPLVSALSRPLIAKKLVEIAEKEDAQAIAHGCTGKGNDQVRFEVSIKSLNPDLEVIAPVREWQWSREEEIEYAASRGIPIPINLDSPYSIDQNLWGRANECGILEDPWAAPPEGAYDLTAPLEKTPDTPEVIEIAFEQGVPVSIDGVSYSLSELILKLNEMAGAHGVGRIDHVENRLVGIKSREVYECPGAMTLIKAHKELEDLTLVKEVAHFKPIIEQKMSEIIYNGLWFSPLKDALHAFLKETQKHVTGIVRVKLFKGHAIVEGRKSEYSLYDEKLATYTKDDAFDHHAAIGFIELWGLPTKVNSIVKKKEQIKA.

10–18 (AYSGGLDTS) serves as a coordination point for ATP. Residue Tyr-87 coordinates L-citrulline. ATP is bound at residue Gly-117. Residues Thr-119, Asn-123, and Asp-124 each contribute to the L-aspartate site. Residue Asn-123 coordinates L-citrulline. 4 residues coordinate L-citrulline: Arg-127, Ser-175, Glu-260, and Tyr-272.

The protein belongs to the argininosuccinate synthase family. Type 1 subfamily. Homotetramer.

Its subcellular location is the cytoplasm. It catalyses the reaction L-citrulline + L-aspartate + ATP = 2-(N(omega)-L-arginino)succinate + AMP + diphosphate + H(+). Its pathway is amino-acid biosynthesis; L-arginine biosynthesis; L-arginine from L-ornithine and carbamoyl phosphate: step 2/3. The polypeptide is Argininosuccinate synthase (Bacillus subtilis (strain 168)).